We begin with the raw amino-acid sequence, 255 residues long: 3-alpha-(or 20-beta)-hydroxysteroid dehydrogenase (255 aa).

10–34 serves as a coordination point for NAD(+); that stretch reads IITGGARGLGAEAARQAVAAGARVV. Substrate is bound at residue Ser-139. The active-site Proton acceptor is the Tyr-152.

Belongs to the short-chain dehydrogenases/reductases (SDR) family. Homotetramer.

It carries out the reaction androstan-3alpha,17beta-diol + NAD(+) = 17beta-hydroxyandrostanone + NADH + H(+). The protein operates within lipid metabolism; C21-steroid hormone metabolism. The chain is 3-alpha-(or 20-beta)-hydroxysteroid dehydrogenase from Streptomyces exfoliatus (Streptomyces hydrogenans).